Consider the following 372-residue polypeptide: Cobalt-precorrin-5B C(1)-methyltransferase (372 aa).

Belongs to the CbiD family.

The catalysed reaction is Co-precorrin-5B + S-adenosyl-L-methionine = Co-precorrin-6A + S-adenosyl-L-homocysteine. The protein operates within cofactor biosynthesis; adenosylcobalamin biosynthesis; cob(II)yrinate a,c-diamide from sirohydrochlorin (anaerobic route): step 6/10. Catalyzes the methylation of C-1 in cobalt-precorrin-5B to form cobalt-precorrin-6A. This Geobacillus thermodenitrificans (strain NG80-2) protein is Cobalt-precorrin-5B C(1)-methyltransferase.